A 248-amino-acid polypeptide reads, in one-letter code: Transmembrane protein 223 (248 aa).

3 helical membrane-spanning segments follow: residues Ile-46–Ala-68, Leu-84–Phe-104, and Tyr-140–Phe-160.

The protein belongs to the TMEM223 family.

It is found in the mitochondrion inner membrane. Mitochondrial ribosome-associated protein involved in the first steps of cytochrome c oxidase complex (complex IV) biogenesis. Stimulates the translation of MT-CO1 mRNA and is a constituent of early MT-CO1 assembly intermediates. This is Transmembrane protein 223 from Danio rerio (Zebrafish).